The sequence spans 346 residues: MSADTETLARKVREEVIKPEQSTLISPDRQSPSLLRREATVEPRFELFHFVFSVCSQKVRGTLMEKGVTFGSNELTILPPQSENYCPQYVRLRLRSEAAAKHRPVSSFTGQSSVDSEGFDPLVVPTLVDHETGRILADSKAICLYLCDALSGGTDLLPADIREAVLKQVQLADTTPHVALLYGADPDGDRRPESMQAVMPGIHAHKIDAVRRNIPLADGDPLLLEAYQHKIVKEEAAASFVINEPQMRTAISKAEQLVTDLDRDLGASTGPWLFGDRFTLADLFWAVSLYRFLWLGYSGFWKDGAGKPRVEAYANRLFARPSVKDAIIQWPGHPPSENVIHLLSNA.

Residues 43 to 154 (PRFELFHFVF…YLCDALSGGT (112 aa)) enclose the GST N-terminal domain. A GST C-terminal domain is found at 189–335 (DRRPESMQAV…AIIQWPGHPP (147 aa)).

It belongs to the GST superfamily.

The enzyme catalyses 2,5-dichlorohydroquinone + 2 glutathione = chlorohydroquinone + glutathione disulfide + chloride + H(+). It carries out the reaction chlorohydroquinone + 2 glutathione = hydroquinone + glutathione disulfide + chloride + H(+). Its pathway is xenobiotic degradation; gamma-hexachlorocyclohexane degradation. In terms of biological role, catalyzes the degradation of 2,5-dichlorohydroquinone (2,5-DCHQ) into hydroquinone (HQ) via chlorohydroquinone (CHQ). The chain is 2,5-dichlorohydroquinone reductive dechlorinase from Sphingobium indicum (strain DSM 16412 / CCM 7286 / MTCC 6364 / B90A).